The following is a 67-amino-acid chain: Conotoxin AbVIO (67 aa).

A signal peptide spans 1–17; sequence VIIIAVLFLTACQLIAT. The propeptide occupies 18 to 40; that stretch reads ASYARSERKHPDLRLSSRNSKLS. 3 disulfide bridges follow: Cys-43/Cys-57, Cys-50/Cys-61, and Cys-56/Cys-66.

The protein belongs to the conotoxin O1 superfamily. As to expression, expressed by the venom duct.

Its subcellular location is the secreted. The sequence is that of Conotoxin AbVIO from Conus abbreviatus (Abbreviated cone).